Consider the following 140-residue polypeptide: Large ribosomal subunit protein uL13 (140 aa).

Part of the 50S ribosomal subunit.

Its function is as follows. This protein is one of the early assembly proteins of the 50S ribosomal subunit, although it is not seen to bind rRNA by itself. It is important during the early stages of 50S assembly. The chain is Large ribosomal subunit protein uL13 from Thermus thermophilus (strain ATCC 27634 / DSM 579 / HB8).